The chain runs to 79 residues: Ixosin (79 aa).

The propeptide at 1–56 is removed in mature form; that stretch reads MSAHKVQIGLSSGQFRVALQVPSVRLKGLGSFHTGSIVLPSQGSLREDQISLHNQD.

Its function is as follows. Has antifungal activity against C.albicans. Has antibacterial activity against the Gram-positive bacterium S.aureus and the Gram-negative bacterium E.coli. Lacks hemolytic activity against rabbit erythrocytes. The sequence is that of Ixosin from Ixodes sinensis (Hard tick).